The following is a 43-amino-acid chain: Photosystem II reaction center protein Psb30 (43 aa).

Residues 16 to 36 traverse the membrane as a helical segment; that stretch reads IAQLTMLAMVLIAGPVVIVLL.

The protein belongs to the Psb30/Ycf12 family. As to quaternary structure, PSII is composed of 1 copy each of membrane proteins PsbA, PsbB, PsbC, PsbD, PsbE, PsbF, PsbH, PsbI, PsbJ, PsbK, PsbL, PsbM, PsbT, PsbX, PsbY, PsbZ, Psb30/Ycf12, peripheral proteins PsbO, CyanoQ (PsbQ), PsbU, PsbV and a large number of cofactors. It forms dimeric complexes.

It is found in the cellular thylakoid membrane. A core subunit of photosystem II (PSII), probably helps stabilize the reaction center. This Trichodesmium erythraeum (strain IMS101) protein is Photosystem II reaction center protein Psb30.